A 208-amino-acid polypeptide reads, in one-letter code: Large ribosomal subunit protein bL25 (208 aa).

The tract at residues M1–R20 is disordered.

This sequence belongs to the bacterial ribosomal protein bL25 family. CTC subfamily. As to quaternary structure, part of the 50S ribosomal subunit; part of the 5S rRNA/L5/L18/L25 subcomplex. Contacts the 5S rRNA. Binds to the 5S rRNA independently of L5 and L18.

This is one of the proteins that binds to the 5S RNA in the ribosome where it forms part of the central protuberance. The sequence is that of Large ribosomal subunit protein bL25 from Xylella fastidiosa (strain 9a5c).